The sequence spans 994 residues: Phosphoenolpyruvate carboxylase (994 aa).

A disordered region spans residues Met1–Arg66. Composition is skewed to low complexity over residues Ala14 to Glu25 and Ala41 to Ala54. Active-site residues include His204 and Lys646.

This sequence belongs to the PEPCase type 1 family. It depends on Mg(2+) as a cofactor.

The catalysed reaction is oxaloacetate + phosphate = phosphoenolpyruvate + hydrogencarbonate. Functionally, forms oxaloacetate, a four-carbon dicarboxylic acid source for the tricarboxylic acid cycle. The chain is Phosphoenolpyruvate carboxylase from Burkholderia mallei (strain NCTC 10247).